The sequence spans 313 residues: Extracellular metalloprotease (313 aa).

A signal peptide spans 1-34; sequence MKLVPRFRKQWFAYLTVLCLALAAAVSFGVPAKA. Positions 35-74 are disordered; it reads AENPQTSVSNTGKEADATKNQTSKADQVSAPYEGTGKTSK. The propeptide occupies 35 to 93; it reads AENPQTSVSNTGKEADATKNQTSKADQVSAPYEGTGKTSKSLYGGQTELEKNIQTLQPS. The segment covering 37 to 60 has biased composition (polar residues); that stretch reads NPQTSVSNTGKEADATKNQTSKAD. Cys-131 and Cys-147 are joined by a disulfide. Active-site charge relay system residues include His-146 and Ser-267.

Belongs to the peptidase S1B family. Monomer.

It localises to the secreted. The sequence is that of Extracellular metalloprotease (mpr) from Bacillus subtilis (strain 168).